Here is a 1387-residue protein sequence, read N- to C-terminus: Magnesium-chelatase subunit ChlH, chloroplastic (1387 aa).

The N-terminal 50 residues, methionine 1–arginine 50, are a transit peptide targeting the chloroplast.

The protein belongs to the Mg-chelatase subunit H family. As to quaternary structure, the magnesium chelatase complex is a heterotrimer consisting of subunits CHLI, CHLD and CHLH.

It is found in the plastid. The protein resides in the chloroplast stroma. It localises to the chloroplast membrane. It carries out the reaction protoporphyrin IX + Mg(2+) + ATP + H2O = Mg-protoporphyrin IX + ADP + phosphate + 3 H(+). The protein operates within porphyrin-containing compound metabolism; chlorophyll biosynthesis. In terms of biological role, involved in chlorophyll biosynthesis. Catalyzes the insertion of magnesium ion into protoporphyrin IX to yield Mg-protoporphyrin IX. The reaction takes place in two steps, with an ATP-dependent activation followed by an ATP-dependent chelation step. May be involved in the plastid-to-nucleus retrograde signaling. This chain is Magnesium-chelatase subunit ChlH, chloroplastic (CHLH), found in Oryza sativa subsp. indica (Rice).